A 674-amino-acid polypeptide reads, in one-letter code: UvrABC system protein B (674 aa).

The Helicase ATP-binding domain maps to 26 to 183; the sequence is EGLEDGLAHQ…RRLAELQYTR (158 aa). ATP is bound at residue 39–46; it reads GVTGSGKT. Residues 92–115 carry the Beta-hairpin motif; the sequence is YYDYYQPEAYVPSSDTFIEKDASV. Residues 431-597 form the Helicase C-terminal domain; it reads QVDDLLSEIR…GLNKKISDIL (167 aa). Residues 634–669 enclose the UVR domain; sequence QKRIHQLEAQMQQHAQNLEFEEAAQVRDQLHQVREL.

The protein belongs to the UvrB family. Forms a heterotetramer with UvrA during the search for lesions. Interacts with UvrC in an incision complex.

The protein localises to the cytoplasm. Functionally, the UvrABC repair system catalyzes the recognition and processing of DNA lesions. A damage recognition complex composed of 2 UvrA and 2 UvrB subunits scans DNA for abnormalities. Upon binding of the UvrA(2)B(2) complex to a putative damaged site, the DNA wraps around one UvrB monomer. DNA wrap is dependent on ATP binding by UvrB and probably causes local melting of the DNA helix, facilitating insertion of UvrB beta-hairpin between the DNA strands. Then UvrB probes one DNA strand for the presence of a lesion. If a lesion is found the UvrA subunits dissociate and the UvrB-DNA preincision complex is formed. This complex is subsequently bound by UvrC and the second UvrB is released. If no lesion is found, the DNA wraps around the other UvrB subunit that will check the other stand for damage. This is UvrABC system protein B from Erwinia tasmaniensis (strain DSM 17950 / CFBP 7177 / CIP 109463 / NCPPB 4357 / Et1/99).